We begin with the raw amino-acid sequence, 205 residues long: Large ribosomal subunit protein uL13 (205 aa).

The protein belongs to the universal ribosomal protein uL13 family.

The polypeptide is Large ribosomal subunit protein uL13 (RpL13A) (Drosophila melanogaster (Fruit fly)).